We begin with the raw amino-acid sequence, 135 residues long: ATP synthase epsilon chain (135 aa).

The disordered stretch occupies residues 84–107 (SLSEEKQSEEQKQRLERAKKALSS). The segment covering 86–102 (SEEKQSEEQKQRLERAK) has biased composition (basic and acidic residues).

The protein belongs to the ATPase epsilon chain family. In terms of assembly, F-type ATPases have 2 components, CF(1) - the catalytic core - and CF(0) - the membrane proton channel. CF(1) has five subunits: alpha(3), beta(3), gamma(1), delta(1), epsilon(1). CF(0) has three main subunits: a, b and c.

Its subcellular location is the cell membrane. In terms of biological role, produces ATP from ADP in the presence of a proton gradient across the membrane. In Elusimicrobium minutum (strain Pei191), this protein is ATP synthase epsilon chain.